A 557-amino-acid chain; its full sequence is Urocanate hydratase (557 aa).

NAD(+) contacts are provided by residues 53–54, Q131, 177–179, E197, R202, 243–244, 264–268, 274–275, and Y323; these read GG, GMG, NA, QTSAH, and YL. The active site involves C411. Residue G493 coordinates NAD(+).

Belongs to the urocanase family. NAD(+) serves as cofactor.

Its subcellular location is the cytoplasm. The enzyme catalyses 4-imidazolone-5-propanoate = trans-urocanate + H2O. Its pathway is amino-acid degradation; L-histidine degradation into L-glutamate; N-formimidoyl-L-glutamate from L-histidine: step 2/3. Its function is as follows. Catalyzes the conversion of urocanate to 4-imidazolone-5-propionate. The sequence is that of Urocanate hydratase from Pseudomonas entomophila (strain L48).